Here is a 590-residue protein sequence, read N- to C-terminus: Aspartate--tRNA(Asp/Asn) ligase (590 aa).

Glu176 is an L-aspartate binding site. The interval 200–203 (QLFK) is aspartate. The L-aspartate site is built by Arg222 and His451. 222–224 (RDE) is a binding site for ATP. ATP is bound at residue Glu485. Arg492 lines the L-aspartate pocket. Residue 537–540 (GIDR) participates in ATP binding.

This sequence belongs to the class-II aminoacyl-tRNA synthetase family. Type 1 subfamily. In terms of assembly, homodimer.

The protein resides in the cytoplasm. The catalysed reaction is tRNA(Asx) + L-aspartate + ATP = L-aspartyl-tRNA(Asx) + AMP + diphosphate. Functionally, aspartyl-tRNA synthetase with relaxed tRNA specificity since it is able to aspartylate not only its cognate tRNA(Asp) but also tRNA(Asn). Reaction proceeds in two steps: L-aspartate is first activated by ATP to form Asp-AMP and then transferred to the acceptor end of tRNA(Asp/Asn). The protein is Aspartate--tRNA(Asp/Asn) ligase of Ehrlichia ruminantium (strain Gardel).